Consider the following 166-residue polypeptide: Large ribosomal subunit protein uL10 (166 aa).

The protein belongs to the universal ribosomal protein uL10 family. As to quaternary structure, part of the ribosomal stalk of the 50S ribosomal subunit. The N-terminus interacts with L11 and the large rRNA to form the base of the stalk. The C-terminus forms an elongated spine to which L12 dimers bind in a sequential fashion forming a multimeric L10(L12)X complex.

Functionally, forms part of the ribosomal stalk, playing a central role in the interaction of the ribosome with GTP-bound translation factors. The protein is Large ribosomal subunit protein uL10 of Bacillus pumilus (strain SAFR-032).